Here is a 169-residue protein sequence, read N- to C-terminus: Lipoprotein signal peptidase (169 aa).

4 helical membrane passes run 4 to 24 (PICS…ILDI), 29 to 49 (WVMA…FNLT), 70 to 90 (WFFA…MYRS), and 101 to 121 (YALI…HGAV). Active-site residues include D123 and D141. Residues 137-157 (FNLADVAICIGAALVIFEGFL) traverse the membrane as a helical segment.

The protein belongs to the peptidase A8 family.

The protein resides in the cell inner membrane. It catalyses the reaction Release of signal peptides from bacterial membrane prolipoproteins. Hydrolyzes -Xaa-Yaa-Zaa-|-(S,diacylglyceryl)Cys-, in which Xaa is hydrophobic (preferably Leu), and Yaa (Ala or Ser) and Zaa (Gly or Ala) have small, neutral side chains.. Its pathway is protein modification; lipoprotein biosynthesis (signal peptide cleavage). Functionally, this protein specifically catalyzes the removal of signal peptides from prolipoproteins. This chain is Lipoprotein signal peptidase, found in Yersinia pestis bv. Antiqua (strain Antiqua).